The sequence spans 314 residues: tRNA dimethylallyltransferase (314 aa).

Residue 10–17 coordinates ATP; that stretch reads GPTAVGKT. 12 to 17 serves as a coordination point for substrate; sequence TAVGKT. Residues 35-38 form an interaction with substrate tRNA region; it reads DSMQ.

Belongs to the IPP transferase family. In terms of assembly, monomer. It depends on Mg(2+) as a cofactor.

It catalyses the reaction adenosine(37) in tRNA + dimethylallyl diphosphate = N(6)-dimethylallyladenosine(37) in tRNA + diphosphate. Its function is as follows. Catalyzes the transfer of a dimethylallyl group onto the adenine at position 37 in tRNAs that read codons beginning with uridine, leading to the formation of N6-(dimethylallyl)adenosine (i(6)A). The protein is tRNA dimethylallyltransferase of Clostridium novyi (strain NT).